The following is a 130-amino-acid chain: Cholecystokinin (130 aa).

Residues 1–20 form the signal peptide; that stretch reads MYSGICIYMFLAMLSTSSSG. A propeptide spanning residues 21 to 60 is cleaved from the precursor; sequence QQATGSHNENPVATELEQSLTEHHRHVRVPSSAGQLKPIQ. Sulfotyrosine is present on tyrosine 112. Phenylalanine 118 is subject to Phenylalanine amide. The propeptide occupies 122 to 130; that stretch reads SAEEYEYSS. Sulfotyrosine occurs at positions 126 and 128.

It belongs to the gastrin/cholecystokinin family. The precursor is cleaved by proteases to produce a number of active cholecystokinins. Expressed in brain, duodenum and small intestine.

The protein localises to the secreted. In terms of biological role, this peptide hormone induces gall bladder contraction and the release of pancreatic enzymes in the gut. Its function in the brain is not clear. In Trachemys scripta (Red-eared slider turtle), this protein is Cholecystokinin.